Consider the following 191-residue polypeptide: Neuronal calcium sensor 1 (191 aa).

Glycine 2 carries N-myristoyl glycine lipidation. EF-hand domains follow at residues 24 to 59, 60 to 95, 96 to 131, and 144 to 179; these read ESEI…FPFG, DPSK…TSRG, TVEE…IYRM, and TPEK…DPTI. Residues aspartate 73, asparagine 75, aspartate 77, glutamate 84, aspartate 109, aspartate 111, aspartate 113, tyrosine 115, glutamate 120, aspartate 157, asparagine 159, aspartate 161, glutamine 163, and glutamate 168 each contribute to the Ca(2+) site.

Belongs to the recoverin family.

Its subcellular location is the perikaryon. The protein resides in the cell projection. It is found in the growth cone. In terms of biological role, neuronal calcium sensor, regulator of G protein-coupled receptor phosphorylation in a calcium dependent manner. Regulates neurite extension and branching by activity-dependent Ca(2+) influx in growth cones. The polypeptide is Neuronal calcium sensor 1 (Lymnaea stagnalis (Great pond snail)).